A 73-amino-acid chain; its full sequence is uncharacterized protein (73 aa).

It belongs to the asfivirus I73R family.

The protein localises to the virion. This is an uncharacterized protein from Ornithodoros (relapsing fever ticks).